A 564-amino-acid polypeptide reads, in one-letter code: Homeobox protein unc-62 (564 aa).

Disordered stretches follow at residues 40–59 (NEQF…ADPA), 216–270 (ERAS…VMGG), 293–313 (SSSS…LHST), 328–397 (PSTC…KVPK), and 455–503 (IDQN…PSSL). Positions 133–218 (SSDVCSSASF…PLDIVGDERA (86 aa)) constitute an MEIS N-terminal domain. The span at 219-230 (SSSQPPMSPGSM) shows a compositional bias: low complexity. Composition is skewed to polar residues over residues 328–344 (PSTC…TPLS) and 381–390 (LSDSANGSQN). Positions 392-454 (KRKVPKVFSK…NARRRIVQPM (63 aa)) form a DNA-binding region, homeobox; TALE-type. 2 stretches are compositionally biased toward polar residues: residues 455 to 469 (IDQN…QMNV) and 494 to 503 (ANYSPDPSSL).

The protein belongs to the TALE/MEIS homeobox family. Forms a heterodimer with homeobox ceh-60.

The protein localises to the nucleus. Functionally, acts redundantly with ceh-20 and ceh-40 to perform overlapping roles during embryogenesis. Required for postembryonic development of the ectoderm, including the Q, V and P cell lineages, playing a crucial role in ensuring that these cells and their descendants undergo their invariant patterns of cell division, migration, fusion and morphogenesis. Has a role in the mig-13 pathway to promote anterior migration of neuroblasts in the Q lineage. Required for multiple roles in regulating vulva development. Associates with homeobox ceh-60 to regulate gene expression, including repression of genes involved in innate immunity and activation of genes involved in vitellogenesis. Involved in lipid homeostasis, contributing to the formation of the cuticle. In Caenorhabditis elegans, this protein is Homeobox protein unc-62 (unc-62).